We begin with the raw amino-acid sequence, 103 residues long: Small ribosomal subunit protein uS10 (103 aa).

The protein belongs to the universal ribosomal protein uS10 family. In terms of assembly, part of the 30S ribosomal subunit.

Involved in the binding of tRNA to the ribosomes. In Alteromonas mediterranea (strain DSM 17117 / CIP 110805 / LMG 28347 / Deep ecotype), this protein is Small ribosomal subunit protein uS10.